Reading from the N-terminus, the 194-residue chain is Small ribosomal subunit protein uS5 (194 aa).

The S5 DRBM domain maps to 26-89 (LEEKVVEIRR…ADAKKHLIRV (64 aa)).

The protein belongs to the universal ribosomal protein uS5 family. Part of the 30S ribosomal subunit. Contacts proteins S4 and S8.

Its function is as follows. With S4 and S12 plays an important role in translational accuracy. In terms of biological role, located at the back of the 30S subunit body where it stabilizes the conformation of the head with respect to the body. The polypeptide is Small ribosomal subunit protein uS5 (Persephonella marina (strain DSM 14350 / EX-H1)).